Consider the following 320-residue polypeptide: Lipoyl synthase (320 aa).

The span at 1 to 11 shows a compositional bias: polar residues; it reads MGGMNDLSSTP. A disordered region spans residues 1–24; sequence MGGMNDLSSTPAPEGDRPARQRKP. Basic and acidic residues predominate over residues 14 to 24; sequence EGDRPARQRKP. [4Fe-4S] cluster-binding residues include Cys-53, Cys-58, Cys-64, Cys-79, Cys-83, Cys-86, and Ser-293. Residues 65-282 enclose the Radical SAM core domain; the sequence is WTKKHATVMI…GAIARAKGFL (218 aa).

Belongs to the radical SAM superfamily. Lipoyl synthase family. The cofactor is [4Fe-4S] cluster.

It localises to the cytoplasm. It catalyses the reaction [[Fe-S] cluster scaffold protein carrying a second [4Fe-4S](2+) cluster] + N(6)-octanoyl-L-lysyl-[protein] + 2 oxidized [2Fe-2S]-[ferredoxin] + 2 S-adenosyl-L-methionine + 4 H(+) = [[Fe-S] cluster scaffold protein] + N(6)-[(R)-dihydrolipoyl]-L-lysyl-[protein] + 4 Fe(3+) + 2 hydrogen sulfide + 2 5'-deoxyadenosine + 2 L-methionine + 2 reduced [2Fe-2S]-[ferredoxin]. Its pathway is protein modification; protein lipoylation via endogenous pathway; protein N(6)-(lipoyl)lysine from octanoyl-[acyl-carrier-protein]: step 2/2. Catalyzes the radical-mediated insertion of two sulfur atoms into the C-6 and C-8 positions of the octanoyl moiety bound to the lipoyl domains of lipoate-dependent enzymes, thereby converting the octanoylated domains into lipoylated derivatives. The polypeptide is Lipoyl synthase (Erythrobacter litoralis (strain HTCC2594)).